The following is a 274-amino-acid chain: Exosome complex component Rrp42 (274 aa).

This sequence belongs to the RNase PH family. Rrp42 subfamily. As to quaternary structure, component of the archaeal exosome complex. Forms a hexameric ring-like arrangement composed of 3 Rrp41-Rrp42 heterodimers. The hexameric ring associates with a trimer of Rrp4 and/or Csl4 subunits.

It localises to the cytoplasm. Its function is as follows. Non-catalytic component of the exosome, which is a complex involved in RNA degradation. Contributes to the structuring of the Rrp41 active site. In Pyrococcus horikoshii (strain ATCC 700860 / DSM 12428 / JCM 9974 / NBRC 100139 / OT-3), this protein is Exosome complex component Rrp42.